The primary structure comprises 388 residues: Succinate--CoA ligase [ADP-forming] subunit beta (388 aa).

Residues 9 to 244 (KQLFAEYGLP…PSQDDPREAH (236 aa)) enclose the ATP-grasp domain. Residues lysine 46, 53 to 55 (GRG), glutamate 99, threonine 102, and glutamate 107 contribute to the ATP site. Mg(2+) is bound by residues asparagine 199 and aspartate 213. Substrate-binding positions include asparagine 264 and 321-323 (GIV).

The protein belongs to the succinate/malate CoA ligase beta subunit family. Heterotetramer of two alpha and two beta subunits. Mg(2+) serves as cofactor.

The catalysed reaction is succinate + ATP + CoA = succinyl-CoA + ADP + phosphate. It carries out the reaction GTP + succinate + CoA = succinyl-CoA + GDP + phosphate. It functions in the pathway carbohydrate metabolism; tricarboxylic acid cycle; succinate from succinyl-CoA (ligase route): step 1/1. Functionally, succinyl-CoA synthetase functions in the citric acid cycle (TCA), coupling the hydrolysis of succinyl-CoA to the synthesis of either ATP or GTP and thus represents the only step of substrate-level phosphorylation in the TCA. The beta subunit provides nucleotide specificity of the enzyme and binds the substrate succinate, while the binding sites for coenzyme A and phosphate are found in the alpha subunit. In Aeromonas hydrophila subsp. hydrophila (strain ATCC 7966 / DSM 30187 / BCRC 13018 / CCUG 14551 / JCM 1027 / KCTC 2358 / NCIMB 9240 / NCTC 8049), this protein is Succinate--CoA ligase [ADP-forming] subunit beta.